The following is a 224-amino-acid chain: LOB domain-containing protein 15 (224 aa).

Residues 44–145 (TPCAACKLLR…AELTAVRSEI (102 aa)) enclose the LOB domain. Residues 171 to 224 (SGGVSVIAPPPQRPTTPPQPTTAHPPSPSSCVFSQPTTRDLEYGNIESENNYFG) form a disordered region. A compositionally biased stretch (pro residues) spans 178-198 (APPPQRPTTPPQPTTAHPPSP).

Belongs to the LOB domain-containing protein family. In terms of tissue distribution, expressed in young shoots, roots, stems, leaves and flowers.

The sequence is that of LOB domain-containing protein 15 (LBD15) from Arabidopsis thaliana (Mouse-ear cress).